A 198-amino-acid polypeptide reads, in one-letter code: Holliday junction branch migration complex subunit RuvA (198 aa).

Residues 1–61 (MILYRIGEII…EYQYATYAFK (61 aa)) are domain I. Residues 62–139 (DFKERLLFVD…KMISPKDAAK (78 aa)) form a domain II region. The interval 140–144 (INETT) is flexible linker. The domain III stretch occupies residues 144-198 (TNTLSEVKETLKMVGFKTKQIDGALSKISSTDDVEKMIEEAIKLMSTQNYESATA).

This sequence belongs to the RuvA family. In terms of assembly, homotetramer. Forms an RuvA(8)-RuvB(12)-Holliday junction (HJ) complex. HJ DNA is sandwiched between 2 RuvA tetramers; dsDNA enters through RuvA and exits via RuvB. An RuvB hexamer assembles on each DNA strand where it exits the tetramer. Each RuvB hexamer is contacted by two RuvA subunits (via domain III) on 2 adjacent RuvB subunits; this complex drives branch migration. In the full resolvosome a probable DNA-RuvA(4)-RuvB(12)-RuvC(2) complex forms which resolves the HJ.

The protein resides in the cytoplasm. The RuvA-RuvB-RuvC complex processes Holliday junction (HJ) DNA during genetic recombination and DNA repair, while the RuvA-RuvB complex plays an important role in the rescue of blocked DNA replication forks via replication fork reversal (RFR). RuvA specifically binds to HJ cruciform DNA, conferring on it an open structure. The RuvB hexamer acts as an ATP-dependent pump, pulling dsDNA into and through the RuvAB complex. HJ branch migration allows RuvC to scan DNA until it finds its consensus sequence, where it cleaves and resolves the cruciform DNA. This chain is Holliday junction branch migration complex subunit RuvA, found in Mycoplasmopsis agalactiae (strain NCTC 10123 / CIP 59.7 / PG2) (Mycoplasma agalactiae).